Here is a 960-residue protein sequence, read N- to C-terminus: MERLSSIDAQLRMLVPGKVSEDDKLIEYDALLLDRFLDILQDLHGDDLKEMVQECYEVAAEYETKHDLQKLDELGKMITSLDPGDSIVIAKSFSHMLNLANLAEEVQIAYRRRIKLKKGDFADENSAITESDIEETLKRLVVDLKKSPAEVFDALKSQTVDLVLTAHPTQSVRRSLLQKHSRIRNCLVQLYSKDITPDDKQELDEALQREIQAAFRTDEIRRTQPTPQDEMRAGMSYFHETIWKGVPKFLRRVDTALKNIGINERVPYNAPLIQFSSWMGGDRDGNPRVTPEVTRDVCLLARMMASNLYCSQIEDLMFELSMWRCSDELRMRADELHRSTKKDAKHYIEFWKKVPPNEPYRVILSDVRDKLYNTRERSRELLSSGHSDIPEEATLTTVEQLLEPLELCYRSLCACGDRVIADGSLLDFLRQVSTFGLSLVRLDIRQESDRHTDVLDAITTYLGIGSYREWPEERRQEWLLSELNGKRPLFGPDLPKTEEIADVLDTFHVIAELPADNFGAYIISMATAPSDVLAVELLQRECHVKTPLRVVPLFEKLADLEAAPAALARLFSIDWYRQRINGKQEVMIGYSDSGKDAGRLSAAWQLYKAQEELIKVAKDFGVKLTMFHGRGGTVGRGGGPTHLAILSQPPDTIHGSLRVTVQGEVIEQSFGEEHLSFRTLQRFTAATLEHGMHPPNAPKPEWRTLLDEMAVVATEEYRSIVFQEPRFVEYFRLATPETEYGRMNIGSRPSKRKPSGGIESLRAIPWIFAWTQTRFHLPVWLGFGGAFKHVLQKDIRNLHMLQEMYNEWPFFRVTIDLVEMVFAKGNPGIAALYDKLLVSEELRPLGEKLRANYEETQKLLLQVAGHRDLLEGDPYLKQRLRLRDAYITTLNVCQAYTLKRIRDPDYHVALRPHLSKEIMDPTKAASELVKLNPGSEYAPGLEDTLILTMKGIAAGLQNTG.

Catalysis depends on residues His167 and Lys595.

This sequence belongs to the PEPCase type 1 family. As to quaternary structure, homotetramer. It depends on Mg(2+) as a cofactor.

It is found in the cytoplasm. The enzyme catalyses oxaloacetate + phosphate = phosphoenolpyruvate + hydrogencarbonate. Its pathway is photosynthesis; C3 acid pathway. Through the carboxylation of phosphoenolpyruvate (PEP) it forms oxaloacetate, a four-carbon dicarboxylic acid source for the tricarboxylic acid cycle. This chain is Phosphoenolpyruvate carboxylase 2, found in Sorghum bicolor (Sorghum).